A 320-amino-acid polypeptide reads, in one-letter code: Malate dehydrogenase (320 aa).

NAD(+) is bound by residues 10 to 15 (GSGMIG) and Asp34. Residues Arg83 and Arg89 each coordinate substrate. NAD(+) contacts are provided by residues Asn96 and 119 to 121 (ITN). 2 residues coordinate substrate: Asn121 and Arg152. The active-site Proton acceptor is His176.

It belongs to the LDH/MDH superfamily. MDH type 3 family.

The enzyme catalyses (S)-malate + NAD(+) = oxaloacetate + NADH + H(+). Functionally, catalyzes the reversible oxidation of malate to oxaloacetate. This is Malate dehydrogenase from Maricaulis maris (strain MCS10) (Caulobacter maris).